Here is a 343-residue protein sequence, read N- to C-terminus: tRNA N6-adenosine threonylcarbamoyltransferase (343 aa).

Positions 116 and 120 each coordinate Fe cation. Substrate-binding positions include 138–142 (LVSGG), aspartate 172, glycine 185, aspartate 189, and asparagine 277. Aspartate 305 provides a ligand contact to Fe cation.

This sequence belongs to the KAE1 / TsaD family. Fe(2+) serves as cofactor.

The protein resides in the cytoplasm. The enzyme catalyses L-threonylcarbamoyladenylate + adenosine(37) in tRNA = N(6)-L-threonylcarbamoyladenosine(37) in tRNA + AMP + H(+). In terms of biological role, required for the formation of a threonylcarbamoyl group on adenosine at position 37 (t(6)A37) in tRNAs that read codons beginning with adenine. Is involved in the transfer of the threonylcarbamoyl moiety of threonylcarbamoyl-AMP (TC-AMP) to the N6 group of A37, together with TsaE and TsaB. TsaD likely plays a direct catalytic role in this reaction. This is tRNA N6-adenosine threonylcarbamoyltransferase from Mycobacterium ulcerans (strain Agy99).